A 484-amino-acid chain; its full sequence is Ornithine decarboxylase (484 aa).

Lysine 114 carries the N6-(pyridoxal phosphate)lysine modification. Residues serine 245, glycine 282, and 315 to 318 each bind pyridoxal 5'-phosphate; that span reads EPGR. 381–382 contacts substrate; the sequence is FD. Catalysis depends on cysteine 422, which acts as the Proton donor; shared with dimeric partner. Residue aspartate 423 participates in substrate binding. Tyrosine 452 is a pyridoxal 5'-phosphate binding site.

It belongs to the Orn/Lys/Arg decarboxylase class-II family. Homodimer. Only the dimer is catalytically active, as the active sites are constructed of residues from both monomers. Requires pyridoxal 5'-phosphate as cofactor.

Its subcellular location is the cytoplasm. It catalyses the reaction L-ornithine + H(+) = putrescine + CO2. It functions in the pathway amine and polyamine biosynthesis; putrescine biosynthesis via L-ornithine pathway; putrescine from L-ornithine: step 1/1. With respect to regulation, inhibited by antizyme (AZ) OAZ1 in response to polyamine levels. AZ inhibits the assembly of the functional homodimer by binding to ODC monomers and targeting them for ubiquitin-independent proteolytic destruction by the 26S proteasome. In terms of biological role, catalyzes the first and rate-limiting step of polyamine biosynthesis that converts ornithine into putrescine, which is the precursor for the polyamines, spermidine and spermine. Polyamines are essential for cell proliferation and are implicated in cellular processes, ranging from DNA replication to apoptosis. This is Ornithine decarboxylase (spe-1) from Neurospora crassa (strain ATCC 24698 / 74-OR23-1A / CBS 708.71 / DSM 1257 / FGSC 987).